We begin with the raw amino-acid sequence, 283 residues long: Para-Rep C7 (283 aa).

The CRESS-DNA virus Rep endonuclease domain occupies 3-96; it reads SIRATHWCFT…IAGPWEYGTW (94 aa). Residues 10–13 carry the RCR-1 motif; sequence CFTL. A divalent metal cation-binding residues include glutamate 36 and histidine 42. Positions 42-44 match the RCR-2 motif; it reads HLQ. The short motif at 51–71 is the Nuclear localization signal element; it reads KHVTLKKMKELLPGAHLEMAK. Catalysis depends on tyrosine 79, which acts as the For DNA cleavage activity. An RCR-3 motif is present at residues 79–82; it reads YCQK. Glutamate 84 contacts a divalent metal cation. A Nuclear localization signal motif is present at residues 96–102; the sequence is WISSGSH. Position 178 to 180 (178 to 180) interacts with ATP; that stretch reads GKS.

This sequence belongs to the nanoviridea/circoviridae replication-associated protein family. As to quaternary structure, homooligomer (Potential). Rep binds to repeated DNA motifs (iterons). The cofactor is Mg(2+). Requires Mn(2+) as cofactor.

The protein resides in the host nucleus. The catalysed reaction is ATP + H2O = ADP + phosphate + H(+). In terms of biological role, initiates and terminates the replication only of its own subviral DNA molecule. The closed circular ssDNA genome is first converted to a superhelical dsDNA. Rep binds a specific hairpin at the genome origin of replication. Introduces an endonucleolytic nick within the intergenic region of the genome, thereby initiating the rolling circle replication (RCR). Following cleavage, binds covalently to the 5'-phosphate of DNA as a tyrosyl ester. The cleavage gives rise to a free 3'-OH that serves as a primer for the cellular DNA polymerase. The polymerase synthesizes the (+) strand DNA by rolling circle mechanism. After one round of replication, a Rep-catalyzed nucleotidyl transfer reaction releases a circular single-stranded virus genome, thereby terminating the replication. Displays origin-specific DNA cleavage, nucleotidyl transferase, ATPase and helicase activities. In Faba bean necrotic yellows C7 alphasatellite (FBNYC7A), this protein is Para-Rep C7 (C7).